Reading from the N-terminus, the 276-residue chain is Undecaprenyl-diphosphatase (276 aa).

6 consecutive transmembrane segments (helical) span residues 43-63 (RAMA…VWEF), 85-105 (GNLL…ADLI), 109-129 (LFNP…MLWA), 183-203 (AATE…AVYS), 214-234 (GDLP…MIAV), and 249-269 (FAWY…FGWV).

The protein belongs to the UppP family.

It localises to the cell inner membrane. It catalyses the reaction di-trans,octa-cis-undecaprenyl diphosphate + H2O = di-trans,octa-cis-undecaprenyl phosphate + phosphate + H(+). In terms of biological role, catalyzes the dephosphorylation of undecaprenyl diphosphate (UPP). Confers resistance to bacitracin. This chain is Undecaprenyl-diphosphatase, found in Pseudomonas putida (strain ATCC 700007 / DSM 6899 / JCM 31910 / BCRC 17059 / LMG 24140 / F1).